The chain runs to 473 residues: Probable DNA N(6)-methyladenine demethylase ALKBH1B (473 aa).

357-359 (NFY) lines the 2-oxoglutarate pocket. Fe cation is bound by residues H368, D391, and H449. 461 to 465 (RLFFR) is a 2-oxoglutarate binding site.

Belongs to the alkB family. Requires Fe(2+) as cofactor. In terms of tissue distribution, undetectable.

It carries out the reaction an N(6)-methyl-2'-deoxyadenosine in DNA + 2-oxoglutarate + O2 = a 2'-deoxyadenosine in DNA + formaldehyde + succinate + CO2. Its function is as follows. Dioxygenase that may catalyzes DNA N(6)-methyladenine (6 mA) demethylation. Requires molecular oxygen, alpha-ketoglutarate and iron. The sequence is that of Probable DNA N(6)-methyladenine demethylase ALKBH1B from Arabidopsis thaliana (Mouse-ear cress).